A 201-amino-acid polypeptide reads, in one-letter code: MQRAWILLTLGLMACVSAETRAELTSDKDMYLDSSSIEEASGLYPIDDDDYSSASGSGAYEDKGSPDLTTSQLIPRISLTSAAPEVETMTLKTQSITPTQTESPEETDKKEFEISEAEEKQDPAVKSTDVYTEKHSDNLFKRTEVLAAVIAGGVIGFLFAIFLILLLVYRMRKKDEGSYDLGERKPSSAAYQKAPTKEFYA.

The first 18 residues, 1-18, serve as a signal peptide directing secretion; that stretch reads MQRAWILLTLGLMACVSA. Residues 19-144 are Extracellular-facing; that stretch reads ETRAELTSDK…HSDNLFKRTE (126 aa). Ser41, Ser55, and Ser57 each carry an O-linked (Xyl...) (glycosaminoglycan) serine glycan. Disordered stretches follow at residues 42–69 and 88–129; these read GLYP…PDLT and TMTL…KSTD. Polar residues predominate over residues 90–102; it reads TLKTQSITPTQTE. Residues 106–123 show a composition bias toward basic and acidic residues; it reads ETDKKEFEISEAEEKQDP. Phosphoserine is present on Ser115. Residues 145 to 169 traverse the membrane as a helical segment; it reads VLAAVIAGGVIGFLFAIFLILLLVY. Over 170-201 the chain is Cytoplasmic; the sequence is RMRKKDEGSYDLGERKPSSAAYQKAPTKEFYA. The tract at residues 178–201 is disordered; the sequence is SYDLGERKPSSAAYQKAPTKEFYA. Ser187 carries the post-translational modification Phosphoserine.

It belongs to the syndecan proteoglycan family. Interacts (via cytoplasmic domain) with SARM1. Forms a complex with SDCBP and PDCD6IP. In terms of processing, O-glycosylated; contains both heparan sulfate and chondroitin sulfate.

The protein resides in the membrane. In terms of biological role, cell surface proteoglycan which regulates dendritic arbor morphogenesis. The polypeptide is Syndecan-2 (Sdc2) (Rattus norvegicus (Rat)).